We begin with the raw amino-acid sequence, 177 residues long: Small ribosomal subunit protein uS5 (177 aa).

The S5 DRBM domain occupies 21-84; that stretch reads LKEKMISVNR…DEARRGMIKI (64 aa).

The protein belongs to the universal ribosomal protein uS5 family. As to quaternary structure, part of the 30S ribosomal subunit. Contacts proteins S4 and S8.

With S4 and S12 plays an important role in translational accuracy. Functionally, located at the back of the 30S subunit body where it stabilizes the conformation of the head with respect to the body. This chain is Small ribosomal subunit protein uS5, found in Nitrosomonas eutropha (strain DSM 101675 / C91 / Nm57).